The primary structure comprises 211 residues: Ribosomal RNA small subunit methyltransferase G (211 aa).

Residues G74, L79, 125-126, and R140 contribute to the S-adenosyl-L-methionine site; that span reads AE.

It belongs to the methyltransferase superfamily. RNA methyltransferase RsmG family.

It is found in the cytoplasm. Specifically methylates the N7 position of guanine in position 518 of 16S rRNA. This chain is Ribosomal RNA small subunit methyltransferase G, found in Clavibacter sepedonicus (Clavibacter michiganensis subsp. sepedonicus).